Consider the following 499-residue polypeptide: Glycerol kinase (499 aa).

Residue T13 participates in ADP binding. 3 residues coordinate ATP: T13, T14, and S15. Residue T13 coordinates sn-glycerol 3-phosphate. R17 contacts ADP. 4 residues coordinate sn-glycerol 3-phosphate: R83, E84, Y135, and D245. Glycerol contacts are provided by R83, E84, Y135, D245, and Q246. 2 residues coordinate ADP: T267 and G310. The ATP site is built by T267, G310, Q314, and A411. 2 residues coordinate ADP: A411 and N415.

The protein belongs to the FGGY kinase family.

The enzyme catalyses glycerol + ATP = sn-glycerol 3-phosphate + ADP + H(+). Its pathway is polyol metabolism; glycerol degradation via glycerol kinase pathway; sn-glycerol 3-phosphate from glycerol: step 1/1. With respect to regulation, inhibited by fructose 1,6-bisphosphate (FBP). Functionally, key enzyme in the regulation of glycerol uptake and metabolism. Catalyzes the phosphorylation of glycerol to yield sn-glycerol 3-phosphate. This is Glycerol kinase from Xylella fastidiosa (strain M23).